The primary structure comprises 146 residues: Hemoglobin subunit beta-1 (146 aa).

Residues 2–146 enclose the Globin domain; the sequence is EWTDKERAII…VVSALGKQYH (145 aa). 2 residues coordinate heme b: His63 and His92.

The protein belongs to the globin family. As to quaternary structure, hb 1 is a heterotetramer of two alpha-1 and two beta-1 chains. In terms of tissue distribution, red blood cells.

Involved in oxygen transport from gills to the various peripheral tissues. The chain is Hemoglobin subunit beta-1 (hbb1) from Gobionotothen gibberifrons (Humped rockcod).